Reading from the N-terminus, the 66-residue chain is Large ribosomal subunit protein bL32 (66 aa).

A compositionally biased stretch (basic residues) spans 1-19 (MAVPKRKMSRSNTRARRSQ). The disordered stretch occupies residues 1–20 (MAVPKRKMSRSNTRARRSQW).

The protein belongs to the bacterial ribosomal protein bL32 family.

The polypeptide is Large ribosomal subunit protein bL32 (Beutenbergia cavernae (strain ATCC BAA-8 / DSM 12333 / CCUG 43141 / JCM 11478 / NBRC 16432 / NCIMB 13614 / HKI 0122)).